Reading from the N-terminus, the 887-residue chain is UPF0182 protein CTC_00086 (887 aa).

The next 7 membrane-spanning stretches (helical) occupy residues 9 to 29 (FIAI…SFII), 47 to 67 (FFTI…SIWL), 87 to 107 (LMIA…SSKY), 146 to 166 (VLIL…YFII), 195 to 215 (GKQL…GYII), 242 to 262 (IYRI…ISII), and 266 to 286 (IKPI…EGAT).

It belongs to the UPF0182 family.

It is found in the cell membrane. The sequence is that of UPF0182 protein CTC_00086 from Clostridium tetani (strain Massachusetts / E88).